A 265-amino-acid polypeptide reads, in one-letter code: Endochitinase At2g43580 (265 aa).

The first 24 residues, 1–24, serve as a signal peptide directing secretion; that stretch reads MALTKIFLILLLSLLGLYSETVKS. Residues 25–59 enclose the Chitin-binding type-1 domain; it reads QNCDCAPNLCCSQFGYCGTTADYCGSTCQSGPCRV. 4 disulfides stabilise this stretch: cysteine 27–cysteine 35, cysteine 29–cysteine 41, cysteine 34–cysteine 48, and cysteine 52–cysteine 57. Positions 67–265 are catalytic; the sequence is GLVGNIVTQI…GLDPGANITC (199 aa). Asparagine 102 carries N-linked (GlcNAc...) asparagine glycosylation. The active-site Proton donor is the glutamate 129. Asparagine 262 is a glycosylation site (N-linked (GlcNAc...) asparagine).

It belongs to the glycosyl hydrolase 19 family. Chitinase class I subfamily.

The enzyme catalyses Random endo-hydrolysis of N-acetyl-beta-D-glucosaminide (1-&gt;4)-beta-linkages in chitin and chitodextrins.. This chain is Endochitinase At2g43580, found in Arabidopsis thaliana (Mouse-ear cress).